The chain runs to 320 residues: Peptidase 1 (320 aa).

A signal peptide spans 1 to 18 (MKIVLAIASLLALSAVYA). Positions 19–98 (RPSSIKTFEE…LKTQFDLNAE (80 aa)) are cleaved as a propeptide — activation peptide. 3 disulfides stabilise this stretch: Cys102–Cys215, Cys129–Cys169, and Cys163–Cys201. Residue Cys132 is part of the active site. An N-linked (GlcNAc...) asparagine glycan is attached at Asn150. Active-site residues include His268 and Asn288.

The protein belongs to the peptidase C1 family. Post-translationally, N-glycosylated. N-glycanase treatment does not completely remove carbohydrates, suggesting that the protein contains additional glycosylation sites.

It is found in the secreted. The catalysed reaction is Broad endopeptidase specificity.. Its function is as follows. Thiol protease, with a preference for substrates with a large hydrophobic side chain in the P2 position, or with basic residues. The sequence is that of Peptidase 1 (DERP1) from Dermatophagoides pteronyssinus (European house dust mite).